Consider the following 181-residue polypeptide: Large ribosomal subunit protein uL6 (181 aa).

Belongs to the universal ribosomal protein uL6 family. As to quaternary structure, part of the 50S ribosomal subunit.

Functionally, this protein binds to the 23S rRNA, and is important in its secondary structure. It is located near the subunit interface in the base of the L7/L12 stalk, and near the tRNA binding site of the peptidyltransferase center. This is Large ribosomal subunit protein uL6 from Phytoplasma mali (strain AT).